The sequence spans 405 residues: Molybdopterin molybdenumtransferase 2 (405 aa).

It belongs to the MoeA family. It depends on Mg(2+) as a cofactor.

The catalysed reaction is adenylyl-molybdopterin + molybdate = Mo-molybdopterin + AMP + H(+). Its pathway is cofactor biosynthesis; molybdopterin biosynthesis. Functionally, catalyzes the insertion of molybdate into adenylated molybdopterin with the concomitant release of AMP. The chain is Molybdopterin molybdenumtransferase 2 (moaE2) from Mycobacterium tuberculosis (strain CDC 1551 / Oshkosh).